We begin with the raw amino-acid sequence, 341 residues long: Queuosine 5'-phosphate N-glycosylase/hydrolase (341 aa).

M1 is subject to N-acetylmethionine. The queuine site is built by H53, F237, D239, D314, Y315, and D319. The active-site Nucleophile or transition state stabilizer is D239.

The protein belongs to the QNG1 protein family.

The catalysed reaction is queuosine 5'-phosphate + H2O = queuine + D-ribose 5-phosphate. Functionally, catalyzes the hydrolysis of queuosine 5'-phosphate, releasing the nucleobase queuine (q). Is required for salvage of queuine from exogenous queuosine (Q) that is imported and then converted to queuosine 5'-phosphate intracellularly. The protein is Queuosine 5'-phosphate N-glycosylase/hydrolase of Bos taurus (Bovine).